We begin with the raw amino-acid sequence, 569 residues long: Proline--tRNA ligase (569 aa).

Belongs to the class-II aminoacyl-tRNA synthetase family. ProS type 1 subfamily. As to quaternary structure, homodimer.

It is found in the cytoplasm. The enzyme catalyses tRNA(Pro) + L-proline + ATP = L-prolyl-tRNA(Pro) + AMP + diphosphate. In terms of biological role, catalyzes the attachment of proline to tRNA(Pro) in a two-step reaction: proline is first activated by ATP to form Pro-AMP and then transferred to the acceptor end of tRNA(Pro). As ProRS can inadvertently accommodate and process non-cognate amino acids such as alanine and cysteine, to avoid such errors it has two additional distinct editing activities against alanine. One activity is designated as 'pretransfer' editing and involves the tRNA(Pro)-independent hydrolysis of activated Ala-AMP. The other activity is designated 'posttransfer' editing and involves deacylation of mischarged Ala-tRNA(Pro). The misacylated Cys-tRNA(Pro) is not edited by ProRS. The polypeptide is Proline--tRNA ligase (Campylobacter jejuni subsp. jejuni serotype O:2 (strain ATCC 700819 / NCTC 11168)).